A 205-amino-acid chain; its full sequence is MVEPREQFFQDLLSAVDQQMDTVKNDIKDIMKEKTSFMVSFENFIERYDTMEKNIQDLQNKYEEMAANLMTVMTDTKIQLGAIIAQLEILMINGTPLPAKKTTIKEAMPLPSSNTNNDQTSPPASGKTSETPKKNPTNAMFFTRSEWASSKTFREKFLTPEIQAILDEQFANKTGIERLHAEGLYMWRTQFSDEQKKMVKEMMKK.

Residues 10 to 75 (QDLLSAVDQQ…AANLMTVMTD (66 aa)) adopt a coiled-coil conformation. The interval 108 to 141 (MPLPSSNTNNDQTSPPASGKTSETPKKNPTNAMF) is disordered. Polar residues predominate over residues 111-141 (PSSNTNNDQTSPPASGKTSETPKKNPTNAMF).

Belongs to the asfivirus K205R family.

The protein resides in the host cytoplasm. Functionally, induces host endoplasmic reticulum stress and consequently activates autophagy and NF-kappa-B signaling pathway. In turn, may induce autophagy-mediated STING1 degradation and innate immune evasion. This is an uncharacterized protein from Ornithodoros (relapsing fever ticks).